The chain runs to 251 residues: Meso-2,3-butanediol dehydrogenase (251 aa).

The NAD(+) site is built by asparagine 15, methionine 17, aspartate 36, aspartate 60, valine 61, and asparagine 87. (R)-acetoin-binding residues include serine 138, serine 140, and tyrosine 151. Residue serine 138 coordinates (S)-acetoin. Residues tyrosine 151, lysine 155, valine 184, and threonine 186 each contribute to the NAD(+) site. Tyrosine 151 is a binding site for (S)-acetoin. Tyrosine 151 serves as the catalytic Proton acceptor.

Belongs to the short-chain dehydrogenases/reductases (SDR) family. Homotetramer; dimer of dimers.

The catalysed reaction is (R,S)-butane-2,3-diol + NAD(+) = (R)-acetoin + NADH + H(+). It catalyses the reaction (S,S)-butane-2,3-diol + NAD(+) = (S)-acetoin + NADH + H(+). The enzyme catalyses (S)-acetoin + NAD(+) = diacetyl + NADH + H(+). Its activity is regulated as follows. Oxidation of meso-2,3-butanediol is enhanced in the presence of Fe(2+). Reduction of diacetyl and (3S/3R)-acetoin is slightly enhanced in the presence of Mg(2+) and Mn(2+). Activity is inhibited by several metal ions, particularly Fe(3+) for reduction of diacetyl and acetoin. Its function is as follows. Catalyzes the NAD-dependent oxidation of meso-2,3-butanediol to (3R)-acetoin, and of (2S,3S)-2,3-butanediol to (3S)-acetoin, with much lower efficiency. Can also oxidize several primary alcohols such as glycerol, 1-2-pentanediol and 1,2-propanediol, with lower activity. Cannot use (2R,3R)-2,3-butanediol. In the presence of NADH, catalyzes the reduction of (3R)-acetoin to meso-2,3-butanediol, of (3S)-acetoin to (2S,3S)-2,3-butanediol and of diacetyl to (3S)-acetoin. No activity is detected with NADPH/NADP(+). The protein is Meso-2,3-butanediol dehydrogenase of Serratia marcescens.